Here is a 2100-residue protein sequence, read N- to C-terminus: Dedicator of cytokinesis protein 8 (2100 aa).

Residues S20, S139, and S452 each carry the phosphoserine modification. The segment at 424 to 453 (DVEPGVGRNSVGEKRSLSQSRRPSERTLSL) is disordered. A compositionally biased stretch (basic and acidic residues) spans 434-452 (VGEKRSLSQSRRPSERTLS). The 170-residue stretch at 561–730 (RNLLYVYPQR…GVFNIEVQAV (170 aa)) folds into the C2 DOCK-type domain. A phosphoserine mark is found at S905, S937, S1146, and S1244. The DOCKER domain maps to 1633-2067 (KSYQASPDLR…LRPMIERKIP (435 aa)). Residue S2088 is modified to Phosphoserine.

It belongs to the DOCK family. Interacts (via DOCKER domain) with GTPase CDC42; the interaction activates CDC42 by exchanging GDP for GTP. The unphosphorylated form interacts (via DOCKER domain) with LRCH1 (via LRR repeats); the interaction prevents the association between DOCK8 and CDC42. Interacts with CCDC88B. In terms of processing, in response to chemokine CXCL12/SDF-1-alpha stimulation, phosphorylated by PRKCA/PKC-alpha which promotes DOCK8 dissociation from LRCH1. In terms of tissue distribution, expressed in T cells. Expressed in bone marrow-derived dendritic cells.

The protein resides in the cytoplasm. Its subcellular location is the cell membrane. It is found in the cell projection. The protein localises to the lamellipodium membrane. In terms of biological role, guanine nucleotide exchange factor (GEF) which specifically activates small GTPase CDC42 by exchanging bound GDP for free GTP. During immune responses, required for interstitial dendritic cell (DC) migration by locally activating CDC42 at the leading edge membrane of DC. Required for CD4(+) T-cell migration in response to chemokine stimulation by promoting CDC42 activation at T cell leading edge membrane. Is involved in NK cell cytotoxicity controlling polarization of microtubule-organizing center (MTOC), and possibly regulating CCDC88B-mediated lytic granule transport to MTOC during cell killing. This chain is Dedicator of cytokinesis protein 8 (Dock8), found in Mus musculus (Mouse).